Here is a 94-residue protein sequence, read N- to C-terminus: Small ribosomal subunit protein bS18 (94 aa).

The span at 1–11 (MANERPTSQQR) shows a compositional bias: polar residues. The disordered stretch occupies residues 1-24 (MANERPTSQQRPAGGPRKRRPFQR).

It belongs to the bacterial ribosomal protein bS18 family. As to quaternary structure, part of the 30S ribosomal subunit. Forms a tight heterodimer with protein bS6.

Binds as a heterodimer with protein bS6 to the central domain of the 16S rRNA, where it helps stabilize the platform of the 30S subunit. The chain is Small ribosomal subunit protein bS18 from Pelobacter propionicus (strain DSM 2379 / NBRC 103807 / OttBd1).